Reading from the N-terminus, the 601-residue chain is Probable inactive receptor kinase At1g27190 (601 aa).

The signal sequence occupies residues 1-24 (MKKIFITLLWLLFISSFLCSSSSA). Asn-52 carries an N-linked (GlcNAc...) asparagine glycan. 5 LRR repeats span residues 73 to 95 (RIISLQLQSMQLAGEIPESLKLC), 97 to 119 (SLQSLDLSGNDLSGSIPSQICSW), 122 to 144 (YLVTLDLSGNKLGGSIPTQIVEC), 146 to 169 (FLNALILSDNKLSGSIPSQLSRLD), and 170 to 192 (RLRRLSLAGNDLSGTIPSELARF). Residues 221–241 (IIIVAGVLGAVGSLCVGLVIF) traverse the membrane as a helical segment. Position 298 is a phosphothreonine (Thr-298). The 286-residue stretch at 301 to 586 (FSSGNIDVSS…KNMADKHGVS (286 aa)) folds into the Protein kinase domain. Residues 307-315 (DVSSRTGVS) and Lys-329 contribute to the ATP site. Phosphoserine is present on Ser-383. The residue at position 399 (Thr-399) is a Phosphothreonine. Tyr-476 carries the post-translational modification Phosphotyrosine. Position 478 is a phosphoserine (Ser-478). Thr-479 bears the Phosphothreonine mark. Residues Ser-483 and Ser-586 each carry the phosphoserine modification.

Belongs to the protein kinase superfamily. Ser/Thr protein kinase family.

The protein resides in the membrane. This is Probable inactive receptor kinase At1g27190 from Arabidopsis thaliana (Mouse-ear cress).